A 64-amino-acid chain; its full sequence is Leader peptide SpeFL (64 aa).

The Ornithine recognition loop signature appears at 32–38 (HIRRTRH). Arginine 35 serves as a coordination point for L-ornithine.

Belongs to the speF operon leader peptide family. Binds ornithine in stalled 70S ribosomes, blocking the upper two-thirds of the exit tunnel. Contacts 23S rRNA and ribosomal proteins L4 and L22.

A small protein (arrest peptide) encoded upstream of inducible ornithine carboxylase gene (speF) that controls expression of downstream genes (usually speF and potE) by transcriptional and translational attenuation. The sequence is that of Leader peptide SpeFL from Haemophilus influenzae (strain ATCC 51907 / DSM 11121 / KW20 / Rd).